Here is a 667-residue protein sequence, read N- to C-terminus: Zeaxanthin epoxidase, chloroplastic (667 aa).

The transit peptide at 1-59 directs the protein to the chloroplast; that stretch reads MGSTPFCYSINPSPSKLDFTRTHVFSPVSKQFYLDLSSFSGKPGGVSGFRSRRALLGVK. Residues 82–110 and 360–373 contribute to the FAD site; these read RVLV…LVFE and GFTW…LLGD. Positions 558–612 constitute an FHA domain; sequence CIVGSEPDQDFPGMRIVIPSSQVSKMHARVIYKDGAFFLMDLRSEHGTYVTDNEG.

It depends on FAD as a cofactor. As to expression, expressed in leaves, stems and flowers, and at lower levels in roots and siliques.

The protein resides in the plastid. It localises to the chloroplast. The catalysed reaction is all-trans-zeaxanthin + 4 reduced [2Fe-2S]-[ferredoxin] + 2 O2 + 4 H(+) = all-trans-violaxanthin + 4 oxidized [2Fe-2S]-[ferredoxin] + 2 H2O. It functions in the pathway plant hormone biosynthesis; abscisate biosynthesis. Its function is as follows. Zeaxanthin epoxidase that plays an important role in the xanthophyll cycle and abscisic acid (ABA) biosynthesis. Converts zeaxanthin into antheraxanthin and subsequently violaxanthin. Required for resistance to osmotic and drought stresses, ABA-dependent stomatal closure, seed development and dormancy, modulation of defense gene expression and disease resistance and non-photochemical quencing (NPQ). Through its role in ABA biosynthesis, regulates the expression of stress-responsive genes such as RD29A during osmotic stress and is required for normal plant growth during vegetative development. Is required for late skotomorphogenic growth through its role in the xanthophyll carotenoids neoxanthin, violaxanthin and antheraxanthin biosynthesis. Required for beta-aminobutyric acid (BABA)-induced priming in disease resistance, tolerance to salt and drought stresses and sterility. Participates in NPQ by regulating the level of zeaxanthin in photosynthetic energy conversion. NPQ is a process that maintains the balance between dissipation and utilization of light energy to minimize the generation of oxidizing molecules and the molecular damages they can generate. The chain is Zeaxanthin epoxidase, chloroplastic (ZEP) from Arabidopsis thaliana (Mouse-ear cress).